A 304-amino-acid chain; its full sequence is Non-specific ribonucleoside hydrolase RihC (304 aa).

Residue His-233 is part of the active site.

It belongs to the IUNH family. RihC subfamily.

Hydrolyzes both purine and pyrimidine ribonucleosides with a broad-substrate specificity. In Klebsiella pneumoniae (strain 342), this protein is Non-specific ribonucleoside hydrolase RihC.